The chain runs to 375 residues: Beta sliding clamp (375 aa).

The protein belongs to the beta sliding clamp family. In terms of assembly, forms a ring-shaped head-to-tail homodimer around DNA which binds and tethers DNA polymerases and other proteins to the DNA. The DNA replisome complex has a single clamp-loading complex (3 tau and 1 each of delta, delta', psi and chi subunits) which binds 3 Pol III cores (1 core on the leading strand and 2 on the lagging strand) each with a beta sliding clamp dimer. Additional proteins in the replisome are other copies of gamma, psi and chi, Ssb, DNA helicase and RNA primase.

The protein localises to the cytoplasm. Functionally, confers DNA tethering and processivity to DNA polymerases and other proteins. Acts as a clamp, forming a ring around DNA (a reaction catalyzed by the clamp-loading complex) which diffuses in an ATP-independent manner freely and bidirectionally along dsDNA. Initially characterized for its ability to contact the catalytic subunit of DNA polymerase III (Pol III), a complex, multichain enzyme responsible for most of the replicative synthesis in bacteria; Pol III exhibits 3'-5' exonuclease proofreading activity. The beta chain is required for initiation of replication as well as for processivity of DNA replication. The polypeptide is Beta sliding clamp (dnaN) (Mycoplasma capricolum subsp. capricolum (strain California kid / ATCC 27343 / NCTC 10154)).